A 95-amino-acid chain; its full sequence is uncharacterized protein (95 aa).

The chain crosses the membrane as a helical span at residues 12-32; it reads LASLIVSMVVLVVGLALWFFV. Positions 66-87 are disordered; sequence ANEPEKEAEPATAASEPKEDED.

The protein resides in the cell membrane. This is an uncharacterized protein from Salmonella typhi.